We begin with the raw amino-acid sequence, 410 residues long: Putative competence-damage inducible protein (410 aa).

Belongs to the CinA family.

The polypeptide is Putative competence-damage inducible protein (Clostridium beijerinckii (strain ATCC 51743 / NCIMB 8052) (Clostridium acetobutylicum)).